Consider the following 241-residue polypeptide: tRNA pseudouridine synthase B (241 aa).

Residue Asp-45 is the Nucleophile of the active site.

This sequence belongs to the pseudouridine synthase TruB family. Type 1 subfamily.

The catalysed reaction is uridine(55) in tRNA = pseudouridine(55) in tRNA. Responsible for synthesis of pseudouridine from uracil-55 in the psi GC loop of transfer RNAs. The sequence is that of tRNA pseudouridine synthase B from Opitutus terrae (strain DSM 11246 / JCM 15787 / PB90-1).